Here is a 459-residue protein sequence, read N- to C-terminus: N-chimaerin (459 aa).

Alanine 2 carries the post-translational modification N-acetylalanine. The SH2 domain maps to glutamate 49–alanine 135. Threonine 192 is modified (phosphothreonine). A Phorbol-ester/DAG-type zinc finger spans residues valine 205–cysteine 255. In terms of domain architecture, Rho-GAP spans cysteine 268–phenylalanine 459. Threonine 340 bears the Phosphothreonine mark.

As to quaternary structure, interacts with EPHA4; effector of EPHA4 in axon guidance linking EPHA4 activation to RAC1 regulation. May also interact with EPHB1 and EPHB2. In terms of processing, phosphorylated. Phosphorylation is EPHA4 kinase activity-dependent.

Functionally, GTPase-activating protein for p21-rac and a phorbol ester receptor. May play an important role in neuronal signal-transduction mechanisms. Involved in the assembly of neuronal locomotor circuits as a direct effector of EPHA4 in axon guidance. The sequence is that of N-chimaerin (Chn1) from Mus musculus (Mouse).